The primary structure comprises 94 residues: Cell division protein FtsB (94 aa).

Topologically, residues 1 to 3 (MRA) are cytoplasmic. A helical transmembrane segment spans residues 4-21 (FAVLLIIALGWLQYTLWF). Topologically, residues 22-94 (GKNGMEDYAQ…YRIIDENSEE (73 aa)) are periplasmic. Positions 40 to 60 (EEVNQGLRNRNGQMFAEIDDL) form a coiled coil.

Belongs to the FtsB family. In terms of assembly, part of a complex composed of FtsB, FtsL and FtsQ.

It localises to the cell inner membrane. Its function is as follows. Essential cell division protein. May link together the upstream cell division proteins, which are predominantly cytoplasmic, with the downstream cell division proteins, which are predominantly periplasmic. The chain is Cell division protein FtsB from Aliivibrio salmonicida (strain LFI1238) (Vibrio salmonicida (strain LFI1238)).